We begin with the raw amino-acid sequence, 1024 residues long: Beta-galactosidase (1024 aa).

Substrate contacts are provided by Asn103 and Asp202. Residue Asp202 coordinates Na(+). Glu417, His419, and Glu462 together coordinate Mg(2+). Substrate contacts are provided by residues Glu462 and 538–541 (EYAH). Residue Glu462 is the Proton donor of the active site. Catalysis depends on Glu538, which acts as the Nucleophile. Asn598 is a binding site for Mg(2+). Na(+) contacts are provided by Phe602 and Asn605. Substrate contacts are provided by Asn605 and Trp1000.

The protein belongs to the glycosyl hydrolase 2 family. In terms of assembly, homotetramer. It depends on Mg(2+) as a cofactor. Requires Na(+) as cofactor.

The enzyme catalyses Hydrolysis of terminal non-reducing beta-D-galactose residues in beta-D-galactosides.. The polypeptide is Beta-galactosidase (Escherichia coli O6:H1 (strain CFT073 / ATCC 700928 / UPEC)).